The primary structure comprises 231 residues: Androgen-dependent TFPI-regulating protein (231 aa).

The Cytoplasmic portion of the chain corresponds to 1-7 (MTRTTTC). A helical transmembrane segment spans residues 8-28 (VYHFLVWNWYIFLNYYIPLIG). Residues 29–45 (KDDEKLKEFHDGGRSKY) are Extracellular-facing. Residues 46–66 (LTLLNLLLQAIFFGVACLDDV) form a helical membrane-spanning segment. Topologically, residues 67-85 (LKRIIGRKDIKFITSTRDL) are cytoplasmic. A helical transmembrane segment spans residues 86–106 (LFSTLVFPISTFIFLVFWTLF). The Extracellular segment spans residues 107 to 123 (YYDRSLIYPKGLDDYFP). Residues 124–144 (AWLNHAMHTYILLFVLVETIL) traverse the membrane as a helical segment. The Cytoplasmic segment spans residues 145–154 (RPHHYPSKKL). The helical transmembrane segment at 155-172 (GLALLGACNLAYITRVLW) threads the bilayer. Over 173–190 (RYSQTGNWVYPVFASLNP) the chain is Extracellular. A helical membrane pass occupies residues 191–211 (LGIIIFFLVCYILNASIYLVG). Topologically, residues 212–231 (EKINHWKWGATVKPLMKKKK) are cytoplasmic.

This sequence belongs to the AIG1 family. In terms of tissue distribution, highly expressed in flank organs and weakly in testis and earlobes.

It is found in the cell membrane. The catalysed reaction is 9-hexadecanoyloxy-octadecanoate + H2O = 9-hydroxy-octadecanoate + hexadecanoate + H(+). It catalyses the reaction 12-hexadecanoyloxy-octadecanoate + H2O = 12-hydroxyoctadecanoate + hexadecanoate + H(+). The enzyme catalyses 9-(9Z-hexadecenoyloxy)-octadecanoate + H2O = (9Z)-hexadecenoate + 9-hydroxy-octadecanoate + H(+). It carries out the reaction 12-(9Z-hexadecenoyloxy)-octadecanoate + H2O = 12-hydroxyoctadecanoate + (9Z)-hexadecenoate + H(+). The catalysed reaction is 13-(9Z-hexadecenoyloxy)-octadecanoate + H2O = 13-hydroxy-octadecanoate + (9Z)-hexadecenoate + H(+). It catalyses the reaction 9-octadecanoyloxy-octadecanoate + H2O = 9-hydroxy-octadecanoate + octadecanoate + H(+). The enzyme catalyses 12-octadecanoyloxy-octadecanoate + H2O = 12-hydroxyoctadecanoate + octadecanoate + H(+). It carries out the reaction 13-octadecanoyloxy-octadecanoate + H2O = 13-hydroxy-octadecanoate + octadecanoate + H(+). The catalysed reaction is 9-(9Z-octadecenoyloxy)-octadecanoate + H2O = 9-hydroxy-octadecanoate + (9Z)-octadecenoate + H(+). It catalyses the reaction 12-(9Z-octadecenoyloxy)-octadecanoate + H2O = 12-hydroxyoctadecanoate + (9Z)-octadecenoate + H(+). The enzyme catalyses 13-(9Z-octadecenoyloxy)-octadecanoate + H2O = 13-hydroxy-octadecanoate + (9Z)-octadecenoate + H(+). It carries out the reaction 5-(9Z-octadecenoyloxy)-octadecanoate + H2O = 5-hydroxy-octadecanoate + (9Z)-octadecenoate + H(+). In terms of biological role, hydrolyzes bioactive fatty-acid esters of hydroxy-fatty acids (FAHFAs), but not other major classes of lipids. Shows a preference for FAHFAs with branching distal from the carboxylate head group of the lipids. Regulates the expression and the cell-associated anticoagulant activity of the inhibitor TFPI in endothelial cells (in vitro). In Mesocricetus auratus (Golden hamster), this protein is Androgen-dependent TFPI-regulating protein (ADTRP).